Consider the following 263-residue polypeptide: Dihydropteroate synthase type-3 (263 aa).

In terms of domain architecture, Pterin-binding spans 2-257 (SKIFGIVNIT…DVKSLSDALK (256 aa)). Asparagine 9 contacts Mg(2+). 4-aminobenzoate is bound at residue serine 49. (7,8-dihydropterin-6-yl)methyl diphosphate-binding residues include aspartate 82, asparagine 101, and aspartate 172. The 6-hydroxymethyl-7,8-dihydropterin site is built by asparagine 101 and aspartate 172. Residue phenylalanine 177 coordinates 4-aminobenzoate. Lysine 211 contributes to the (7,8-dihydropterin-6-yl)methyl diphosphate binding site. 6-hydroxymethyl-7,8-dihydropterin is bound at residue lysine 211. Serine 212 serves as a coordination point for 4-aminobenzoate. 245-247 (RTH) lines the (7,8-dihydropterin-6-yl)methyl diphosphate pocket.

The protein belongs to the DHPS family. Requires Mg(2+) as cofactor.

It carries out the reaction (7,8-dihydropterin-6-yl)methyl diphosphate + 4-aminobenzoate = 7,8-dihydropteroate + diphosphate. It participates in cofactor biosynthesis; tetrahydrofolate biosynthesis; 7,8-dihydrofolate from 2-amino-4-hydroxy-6-hydroxymethyl-7,8-dihydropteridine diphosphate and 4-aminobenzoate: step 1/2. Functionally, catalyzes the condensation of para-aminobenzoate (pABA) with 6-hydroxymethyl-7,8-dihydropterin diphosphate (DHPt-PP) to form 7,8-dihydropteroate (H2Pte), the immediate precursor of folate derivatives. Confers resistance to sulfonamide antibiotics, including sulfamethoxazole (SMX), sulfadiazine and sulfisoxazole. In Escherichia coli, this protein is Dihydropteroate synthase type-3.